We begin with the raw amino-acid sequence, 192 residues long: Adenine phosphoribosyltransferase (192 aa).

It belongs to the purine/pyrimidine phosphoribosyltransferase family. As to quaternary structure, homodimer.

It is found in the cytoplasm. The enzyme catalyses AMP + diphosphate = 5-phospho-alpha-D-ribose 1-diphosphate + adenine. It functions in the pathway purine metabolism; AMP biosynthesis via salvage pathway; AMP from adenine: step 1/1. Catalyzes a salvage reaction resulting in the formation of AMP, that is energically less costly than de novo synthesis. The protein is Adenine phosphoribosyltransferase of Corynebacterium efficiens (strain DSM 44549 / YS-314 / AJ 12310 / JCM 11189 / NBRC 100395).